The primary structure comprises 274 residues: 2,3,4,5-tetrahydropyridine-2,6-dicarboxylate N-succinyltransferase (274 aa).

Substrate contacts are provided by Arg-106 and Asp-143.

Belongs to the transferase hexapeptide repeat family. As to quaternary structure, homotrimer.

Its subcellular location is the cytoplasm. The catalysed reaction is (S)-2,3,4,5-tetrahydrodipicolinate + succinyl-CoA + H2O = (S)-2-succinylamino-6-oxoheptanedioate + CoA. It participates in amino-acid biosynthesis; L-lysine biosynthesis via DAP pathway; LL-2,6-diaminopimelate from (S)-tetrahydrodipicolinate (succinylase route): step 1/3. This is 2,3,4,5-tetrahydropyridine-2,6-dicarboxylate N-succinyltransferase from Cupriavidus metallidurans (strain ATCC 43123 / DSM 2839 / NBRC 102507 / CH34) (Ralstonia metallidurans).